The following is a 58-amino-acid chain: Metallothionein-1 (58 aa).

Residues Pro1–Ser28 form a beta region. The a divalent metal cation site is built by Cys4, Cys5, Cys9, Cys11, Cys16, Cys20, Cys22, Cys25, Cys27, Cys30, Cys33, Cys37, Cys39, Cys45, Cys49, Cys53, Cys55, and Cys56. The tract at residues Pro29 to Thr58 is alpha.

It belongs to the metallothionein superfamily. Type 3 family.

In terms of biological role, metallothioneins have a high content of cysteine residues that bind various heavy metals. Class I MTS in marine crustacea are involved in the sequestration of elevated levels of heavy-metal ions. This Scylla serrata (Mud crab) protein is Metallothionein-1.